The sequence spans 301 residues: Cell division control protein 2 homolog 1 (301 aa).

Residues 5-297 form the Protein kinase domain; the sequence is YERLQKIGEG…AAQALEHPYF (293 aa). ATP is bound by residues 11–19 and K34; that span reads IGEGSYGVV. S15 is subject to Phosphoserine. At Y16 the chain carries Phosphotyrosine. Catalysis depends on D127, which acts as the Proton acceptor. The residue at position 160 (T160) is a Phosphothreonine; by CAK.

Belongs to the protein kinase superfamily. CMGC Ser/Thr protein kinase family. CDC2/CDKX subfamily. In terms of assembly, forms a stable but non-covalent complex with a regulatory subunit and with a cyclin.

The enzyme catalyses L-seryl-[protein] + ATP = O-phospho-L-seryl-[protein] + ADP + H(+). The catalysed reaction is L-threonyl-[protein] + ATP = O-phospho-L-threonyl-[protein] + ADP + H(+). Phosphorylation at Ser-15 or Tyr-16 inactivates the enzyme, while phosphorylation at Thr-160 activates it. Its function is as follows. Probably involved in the control of the cell cycle. The sequence is that of Cell division control protein 2 homolog 1 (CRK1) from Trypanosoma brucei brucei.